Reading from the N-terminus, the 395-residue chain is 1-deoxy-D-xylulose 5-phosphate reductoisomerase (395 aa).

Residues T10, G11, S12, I13, R37, Q38, and N124 each contribute to the NADPH site. 1-deoxy-D-xylulose 5-phosphate is bound at residue K125. An NADPH-binding site is contributed by E126. Mn(2+) is bound at residue D150. Residues S151, E152, S179, and H202 each contribute to the 1-deoxy-D-xylulose 5-phosphate site. E152 serves as a coordination point for Mn(2+). G208 contacts NADPH. 1-deoxy-D-xylulose 5-phosphate is bound by residues S215, N220, K221, and E224. E224 is a binding site for Mn(2+).

It belongs to the DXR family. Requires Mg(2+) as cofactor. The cofactor is Mn(2+).

The catalysed reaction is 2-C-methyl-D-erythritol 4-phosphate + NADP(+) = 1-deoxy-D-xylulose 5-phosphate + NADPH + H(+). It participates in isoprenoid biosynthesis; isopentenyl diphosphate biosynthesis via DXP pathway; isopentenyl diphosphate from 1-deoxy-D-xylulose 5-phosphate: step 1/6. In terms of biological role, catalyzes the NADPH-dependent rearrangement and reduction of 1-deoxy-D-xylulose-5-phosphate (DXP) to 2-C-methyl-D-erythritol 4-phosphate (MEP). This is 1-deoxy-D-xylulose 5-phosphate reductoisomerase from Cupriavidus pinatubonensis (strain JMP 134 / LMG 1197) (Cupriavidus necator (strain JMP 134)).